The primary structure comprises 356 residues: 3-dehydroquinate synthase (356 aa).

Residues 69–74, 103–107, 127–128, Lys140, Lys149, and 167–170 contribute to the NAD(+) site; these read DGEKFK, GVIGD, TT, and CLKT. Residues Glu182, His245, and His262 each contribute to the Zn(2+) site.

This sequence belongs to the sugar phosphate cyclases superfamily. Dehydroquinate synthase family. Requires Co(2+) as cofactor. The cofactor is Zn(2+). It depends on NAD(+) as a cofactor.

It is found in the cytoplasm. It carries out the reaction 7-phospho-2-dehydro-3-deoxy-D-arabino-heptonate = 3-dehydroquinate + phosphate. It functions in the pathway metabolic intermediate biosynthesis; chorismate biosynthesis; chorismate from D-erythrose 4-phosphate and phosphoenolpyruvate: step 2/7. Its function is as follows. Catalyzes the conversion of 3-deoxy-D-arabino-heptulosonate 7-phosphate (DAHP) to dehydroquinate (DHQ). The polypeptide is 3-dehydroquinate synthase (Psychromonas ingrahamii (strain DSM 17664 / CCUG 51855 / 37)).